The primary structure comprises 1166 residues: Tectonin beta-propeller repeat-containing protein 1 (1166 aa).

4 TECPR repeats span residues 209 to 240, 254 to 285, 301 to 332, and 344 to 376; these read LSVW…SLVD, DLIW…SIVE, SVVW…IEMV, and DQVW…KAIV. Residues serine 386, serine 388, serine 391, serine 413, and serine 418 each carry the phosphoserine modification. The tract at residues 403–492 is disordered; sequence VRGSGTESAP…PAPTPAELPW (90 aa). Over residues 407 to 418 the composition is skewed to polar residues; sequence GTESAPSDTDAS. The span at 420–436 shows a compositional bias: basic and acidic residues; sequence EVERQGPERSLPKESLD. Polar residues predominate over residues 437-446; it reads NSRNLKGSSS. Over residues 447-456 the composition is skewed to basic and acidic residues; the sequence is KGHESTRNTE. The PH domain occupies 616–722; the sequence is KTGALQWWCD…WLTLLSLSCC (107 aa). A TECPR 5 repeat occupies 734 to 761; that stretch reads QAIWSVTCKGDIFVSEPSPDLEAHEHLL. Serine 943 carries the post-translational modification Phosphoserine. TECPR repeat units lie at residues 958 to 989, 1003 to 1034, 1049 to 1080, and 1092 to 1132; these read IALW…LHVG, YQVW…YHIP, TSVY…EHVS, and DQVW…DYGI. The disordered stretch occupies residues 1147–1166; that stretch reads RAPRNMSRDQEAHGPGPVCC.

This sequence belongs to the TECPR1 family. In terms of assembly, interacts with ATG5; the interaction is direct. Interacts with WIPI2. Interacts with the ATG5-ATG12 conjugate, the interaction is however mutually exclusive with ATG16, since it does not interact with ATG12-ATG5-ATG16 complex.

The protein localises to the cytoplasmic vesicle. The protein resides in the autophagosome membrane. Its subcellular location is the lysosome membrane. Its function is as follows. Tethering factor involved in autophagy. Involved in autophagosome maturation by promoting the autophagosome fusion with lysosomes: acts by associating with both the ATG5-ATG12 conjugate and phosphatidylinositol-3-phosphate (PtdIns(3)P) present at the surface of autophagosomes. Also involved in selective autophagy against bacterial pathogens, by being required for phagophore/preautophagosomal structure biogenesis and maturation. The protein is Tectonin beta-propeller repeat-containing protein 1 (Tecpr1) of Rattus norvegicus (Rat).